The chain runs to 377 residues: tRNA pseudouridine synthase Pus10 (377 aa).

D206 acts as the Nucleophile in catalysis. Positions 270 and 339 each coordinate substrate.

The protein belongs to the pseudouridine synthase Pus10 family.

The catalysed reaction is uridine(54) in tRNA = pseudouridine(54) in tRNA. It catalyses the reaction uridine(55) in tRNA = pseudouridine(55) in tRNA. In terms of biological role, responsible for synthesis of pseudouridine from uracil-54 and uracil-55 in the psi GC loop of transfer RNAs. The polypeptide is tRNA pseudouridine synthase Pus10 (Picrophilus torridus (strain ATCC 700027 / DSM 9790 / JCM 10055 / NBRC 100828 / KAW 2/3)).